The chain runs to 339 residues: Mitogen-activated protein kinase kinase kinase 18 (339 aa).

In terms of domain architecture, Protein kinase spans 3–263 (WTRGKTLGRG…ASQLLNHPFL (261 aa)). Residues 9 to 17 (LGRGSTATV) and K32 contribute to the ATP site. D131 functions as the Proton acceptor in the catalytic mechanism. The residue at position 301 (S301) is a Phosphoserine.

The protein belongs to the protein kinase superfamily. Ser/Thr protein kinase family. As to quaternary structure, interacts with ABI1. Binds to MKK3. Associates with SRK2E within the nucleus. In terms of processing, autophosphorylated. Post-translationally, unstable protein degraded by the proteasome pathway; this degradation is promoted by ABI1, but blocked by ABA. Expressed in roots, leaves and flowers.

It is found in the nucleus. The catalysed reaction is L-seryl-[protein] + ATP = O-phospho-L-seryl-[protein] + ADP + H(+). The enzyme catalyses L-threonyl-[protein] + ATP = O-phospho-L-threonyl-[protein] + ADP + H(+). With respect to regulation, kinase activity is activated by abscisic acid (ABA). Inhibited by ABI1. Activated by SRK2E. Its function is as follows. Component of the abscisic acid (ABA) signaling pathway that acts as ABA signal transducer in the context of abiotic stresses. Triggers MPK1, MPK2, MPK7 and MPK14 activation in a MKK3-dependent manner and MPK6 activation in a MKK3-independent manner. Mediates the ABA-dependent activation of the MKK3-MPK7 module. Positive regulator of ABA responses leading to the induction of gene expression (e.g. RD29B and RAB18) and involved in various responses including stomatal development, stomatal movement, inhibition of germination and root growth. Promotes leaf senescence. The chain is Mitogen-activated protein kinase kinase kinase 18 from Arabidopsis thaliana (Mouse-ear cress).